A 340-amino-acid polypeptide reads, in one-letter code: Fructose-1,6-bisphosphatase class 1 (340 aa).

Mg(2+)-binding residues include Glu107, Asp126, Leu128, and Asp129. Asn215 is a binding site for substrate. Glu287 provides a ligand contact to Mg(2+).

It belongs to the FBPase class 1 family. In terms of assembly, homotetramer. It depends on Mg(2+) as a cofactor.

It is found in the cytoplasm. The catalysed reaction is beta-D-fructose 1,6-bisphosphate + H2O = beta-D-fructose 6-phosphate + phosphate. It functions in the pathway carbohydrate biosynthesis; gluconeogenesis. This chain is Fructose-1,6-bisphosphatase class 1, found in Brucella canis (strain ATCC 23365 / NCTC 10854 / RM-666).